A 217-amino-acid chain; its full sequence is N-(5'-phosphoribosyl)anthranilate isomerase (217 aa).

This sequence belongs to the TrpF family.

The enzyme catalyses N-(5-phospho-beta-D-ribosyl)anthranilate = 1-(2-carboxyphenylamino)-1-deoxy-D-ribulose 5-phosphate. It functions in the pathway amino-acid biosynthesis; L-tryptophan biosynthesis; L-tryptophan from chorismate: step 3/5. This chain is N-(5'-phosphoribosyl)anthranilate isomerase, found in Bacillus velezensis (strain DSM 23117 / BGSC 10A6 / LMG 26770 / FZB42) (Bacillus amyloliquefaciens subsp. plantarum).